The sequence spans 183 residues: Glutathione-regulated potassium-efflux system ancillary protein KefG (183 aa).

It belongs to the NAD(P)H dehydrogenase (quinone) family. KefG subfamily. As to quaternary structure, interacts with KefB.

The protein resides in the cell inner membrane. The enzyme catalyses a quinone + NADH + H(+) = a quinol + NAD(+). It catalyses the reaction a quinone + NADPH + H(+) = a quinol + NADP(+). Functionally, regulatory subunit of a potassium efflux system that confers protection against electrophiles. Required for full activity of KefB. The chain is Glutathione-regulated potassium-efflux system ancillary protein KefG from Salmonella paratyphi B (strain ATCC BAA-1250 / SPB7).